We begin with the raw amino-acid sequence, 208 residues long: Uracil phosphoribosyltransferase (208 aa).

5-phospho-alpha-D-ribose 1-diphosphate-binding positions include Arg78, Arg103, and 130–138; that span reads DPMLATGGS. Residues Ile193 and 198-200 contribute to the uracil site; that span reads GDA. Asp199 is a 5-phospho-alpha-D-ribose 1-diphosphate binding site.

The protein belongs to the UPRTase family. Requires Mg(2+) as cofactor.

It catalyses the reaction UMP + diphosphate = 5-phospho-alpha-D-ribose 1-diphosphate + uracil. It functions in the pathway pyrimidine metabolism; UMP biosynthesis via salvage pathway; UMP from uracil: step 1/1. Its activity is regulated as follows. Allosterically activated by GTP. Catalyzes the conversion of uracil and 5-phospho-alpha-D-ribose 1-diphosphate (PRPP) to UMP and diphosphate. The sequence is that of Uracil phosphoribosyltransferase from Salmonella agona (strain SL483).